The sequence spans 292 residues: MKFGRKIVMDKVKVTYQYLLFVWRRSEQDNIKVPAGHLAYVTLLSIVPLLAVIFYMLAAFPVFSDLKGMLEDLIYNNLLPTSGDTIQEHISGFIENTKKMSMMGIGSLIAIALLLISTIDQTINRIWRCTNKRSRIQSFTIYWTILSLGPVIIGASLALSSYLFSVFQEHGSLSFGQRLLSLMPFILTWLTFAGVYTLVPHQRVSFRYALIGGLIAAILFFFGTDLFRLYITNFPSQQIIYGALAVIPILFVWIYYSWLIVLIGAEVTATLEEFLKQQEDNNVTKEYLGADI.

The next 6 membrane-spanning stretches (helical) occupy residues 43–63 (LLSIVPLLAVIFYMLAAFPVF), 100–120 (MSMMGIGSLIAIALLLISTID), 139–159 (FTIYWTILSLGPVIIGASLAL), 179–199 (LLSLMPFILTWLTFAGVYTLV), 209–229 (ALIGGLIAAILFFFGTDLFRL), and 243–263 (ALAVIPILFVWIYYSWLIVLI).

The protein belongs to the UPF0761 family.

It localises to the cell inner membrane. This is UPF0761 membrane protein Ping_3482 from Psychromonas ingrahamii (strain DSM 17664 / CCUG 51855 / 37).